The chain runs to 2022 residues: Transient receptor potential cation channel subfamily M member 6 (2022 aa).

At 1–741 (MKEQPVLERL…MWMGRLKMRK (741 aa)) the chain is on the cytoplasmic side. The helical transmembrane segment at 742–762 (NSWLKIIISIILPPTILTLEF) threads the bilayer. Residues 763 to 841 (KSKAEMSHVP…YEFYSAPIVK (79 aa)) are Extracellular-facing. Residues 842 to 862 (FWFYTMAYLAFLMLFTYTVLV) traverse the membrane as a helical segment. The Cytoplasmic portion of the chain corresponds to 863 to 905 (EMQPQPSVQEWLVSIYIFTNAIEVVREICISEPGKFTQKVKVW). Residues 906–926 (ISEYWNLTETVAIGLFSAGFV) traverse the membrane as a helical segment. Residues 927-939 (LRWGDPPFHTAGR) lie on the Extracellular side of the membrane. A helical transmembrane segment spans residues 940 to 960 (LIYCIDIIFWFSRLLDFFAVN). At 961–972 (QHAGPYVTMIAK) the chain is on the cytoplasmic side. A helical membrane pass occupies residues 973–993 (MTANMFYIVIIMAIVLLSFGV). The Extracellular portion of the chain corresponds to 994–1012 (ARKAILSPKEPPSWSLARD). Residues 1013 to 1033 (IVFEPYWMIYGEVYAGEIDVC) constitute an intramembrane region (pore-forming). Topologically, residues 1034–1047 (SSQPSCPPGSFLTP) are extracellular. Residues 1048–1068 (FLQAVYLFVQYIIMVNLLIAF) traverse the membrane as a helical segment. Residues 1069–2022 (FNNVYLDMES…RNSPEDDMQL (954 aa)) are Cytoplasmic-facing. Residues 1479 to 1516 (TCDSDSSRSEQHQKQAQDSSLSDNSTRSAQSSECSEVG) form a disordered region. Residues 1483-1493 (DSSRSEQHQKQ) are compositionally biased toward basic and acidic residues. A compositionally biased stretch (polar residues) spans 1494–1512 (AQDSSLSDNSTRSAQSSEC). The region spanning 1750 to 1980 (NLDKSMSSWS…CCRKLKLPDL (231 aa)) is the Alpha-type protein kinase domain. 5 residues coordinate ADP: G1777, G1778, L1779, R1780, and K1804. T1851 is subject to Phosphothreonine; by autocatalysis. Residues E1876 and M1879 each coordinate ADP. Position 1909 (H1909) interacts with Zn(2+). Residue D1923 is the Proton acceptor of the active site. D1933 lines the ADP pocket. The Zn(2+) site is built by H1966, C1968, and C1972. Residues 1997-2022 (EIKIESAEEPPARETGRNSPEDDMQL) form a disordered region. Positions 1998–2016 (IKIESAEEPPARETGRNSP) are enriched in basic and acidic residues.

In the C-terminal section; belongs to the protein kinase superfamily. Alpha-type protein kinase family. ALPK subfamily. This sequence in the N-terminal section; belongs to the transient receptor (TC 1.A.4) family. LTrpC subfamily. TRPM6 sub-subfamily. Homomers. Forms heteromers with TRPM7; TRPM6 increases the current amplitude of TRPM6/7 heteromers as compared to TRPM7 homomer. Interacts (via kinase domain) with RACK1. Post-translationally, autophosphorylated; autophosphorylation controlls the protein kinase activity of TRPM6 towards their substrates. Autophosphorylation of Thr-1851 in the kinase domain is essential for the inhibitory effect of RACK1. In terms of processing, the C-terminus of TRPM6 is proteolytically cleaved in vivo, in a cell type-specific fashion, releasing the kinase module from the transmembrane domain. The cleaved kinase fragments are translocated to the nucleus to phosphorylate histones and regulate gene expression. In terms of tissue distribution, highly expressed in kidney and colon. Isoform TRPM6a and isoform TRPM6b, are coexpressed with TRPM7 in kidney, and testis, and are also found in several cell lines of lung origin. Isoform TRPM6c is detected only in testis and in NCI-H510A small cell lung carcinoma cells.

Its subcellular location is the cell membrane. It is found in the apical cell membrane. It localises to the nucleus. It carries out the reaction L-seryl-[protein] + ATP = O-phospho-L-seryl-[protein] + ADP + H(+). It catalyses the reaction L-threonyl-[protein] + ATP = O-phospho-L-threonyl-[protein] + ADP + H(+). The catalysed reaction is Mg(2+)(in) = Mg(2+)(out). The enzyme catalyses Ca(2+)(in) = Ca(2+)(out). It carries out the reaction Zn(2+)(in) = Zn(2+)(out). Strongly inhibited by intracellular Mg(2+); unlikely to be active at physiological levels of intracellular Mg(2+). In the heteromeric TRPM6-TRPM7 channels complexes, TRPM7 are able to offset the very high sensitivity of TRPM6 to cytosolic Mg(2+) to physiologically relevant concentrations, whereas TRPM6 relieve TRPM7 from the inhibitory action of Mg-ATP. Consequently, the association of TRPM6 with TRPM7 allow for high constitutive activity of TRPM6/7 in the presence of physiological levels of Mg(2+) and Mg-ATP. The kinase activity is controlled through the autophosphorylation of a serine/threonine-rich region located to the N-terminal of the catalytic domain. Its function is as follows. Bifunctional protein that combines an ion channel with an intrinsic kinase domain, enabling it to modulate cellular functions either by conducting ions through the pore or by phosphorylating downstream proteins via its kinase domain. Crucial for Mg(2+) homeostasis. Has an important role in epithelial Mg(2+) transport and in the active Mg(2+) absorption in the gut and kidney. However, whether TRPM6 forms functional homomeric channels by itself or functions primarily as a subunit of heteromeric TRPM6-TRPM7 channels, is still under debate. Functionally, the C-terminal kinase domain can be cleaved from the channel segment in a cell-type-specific fashion. The cleaved kinase fragments can translocate to the nucleus, and bind chromatin-remodeling complex proteins to ultimately phosphorylate specific Ser/Thr residues of histones known to be functionally important for cell differentiation and development. The sequence is that of Transient receptor potential cation channel subfamily M member 6 (TRPM6) from Homo sapiens (Human).